A 265-amino-acid chain; its full sequence is Homeobox protein CDX-1 (265 aa).

Residues 9–153 (KDSPVYPGPA…GGGGSGKTRT (145 aa)) are disordered. The segment covering 30–42 (YGPPAPPPAPPQY) has biased composition (pro residues). Low complexity predominate over residues 73 to 92 (AAAYGPGPAAPAASPASLAF). The segment covering 93-108 (GPPPDFSPVPAPPGPG) has biased composition (pro residues). A compositionally biased stretch (low complexity) spans 110-126 (GLLAQPLGGPGTPSSPG). A DNA-binding region (homeobox) is located at residues 154-213 (KDKYRVVYTDHQRLELEKEFHYSRYITIRRKSELAANLGLTERQVKIWFQNRRAKERKVN). An interaction with DNA region spans residues 157–178 (YRVVYTDHQRLELEKEFHYSRY). Residues 196 to 207 (RQVKIWFQNRRA) are interaction with 5-mCpG DNA. Residues 207–217 (AKERKVNKKKQ) show a composition bias toward basic residues. A disordered region spans residues 207 to 265 (AKERKVNKKKQQQQQPPQPPMAHDITATPAGPSLGGLCPSNTSLLATSSPMPVKEEFLP). Polar residues predominate over residues 245–256 (PSNTSLLATSSP).

This sequence belongs to the Caudal homeobox family. As to expression, intestinal epithelium.

The protein localises to the nucleus. Its function is as follows. Plays a role in transcriptional regulation. Involved in activated KRAS-mediated transcriptional activation of PRKD1 in colorectal cancer (CRC) cells. Binds to the PRKD1 promoter in colorectal cancer (CRC) cells. Could play a role in the terminal differentiation of the intestine. Binds preferentially to methylated DNA. This chain is Homeobox protein CDX-1 (CDX1), found in Homo sapiens (Human).